The primary structure comprises 236 residues: Small ribosomal subunit protein uS2c (236 aa).

This sequence belongs to the universal ribosomal protein uS2 family.

The protein localises to the plastid. It is found in the chloroplast. The protein is Small ribosomal subunit protein uS2c (rps2) of Cucumis sativus (Cucumber).